We begin with the raw amino-acid sequence, 209 residues long: Large ribosomal subunit protein uL3 (209 aa).

The interval 128-163 (AHRGPMTHGSKFHRAVGSMGASSDPSRTFKNKRMPG) is disordered.

Belongs to the universal ribosomal protein uL3 family. As to quaternary structure, part of the 50S ribosomal subunit. Forms a cluster with proteins L14 and L19.

Functionally, one of the primary rRNA binding proteins, it binds directly near the 3'-end of the 23S rRNA, where it nucleates assembly of the 50S subunit. The sequence is that of Large ribosomal subunit protein uL3 from Clostridium botulinum (strain 657 / Type Ba4).